A 288-amino-acid polypeptide reads, in one-letter code: Homoserine kinase (288 aa).

79–89 is an ATP binding site; it reads PPARGLGSSSA.

The protein belongs to the GHMP kinase family. Homoserine kinase subfamily.

Its subcellular location is the cytoplasm. The enzyme catalyses L-homoserine + ATP = O-phospho-L-homoserine + ADP + H(+). The protein operates within amino-acid biosynthesis; L-threonine biosynthesis; L-threonine from L-aspartate: step 4/5. Its function is as follows. Catalyzes the ATP-dependent phosphorylation of L-homoserine to L-homoserine phosphate. The polypeptide is Homoserine kinase (Listeria monocytogenes serotype 4a (strain HCC23)).